We begin with the raw amino-acid sequence, 401 residues long: Nicotinate phosphoribosyltransferase (401 aa).

H224 carries the phosphohistidine; by autocatalysis modification.

It belongs to the NAPRTase family. Post-translationally, transiently phosphorylated on a His residue during the reaction cycle. Phosphorylation strongly increases the affinity for substrates and increases the rate of nicotinate D-ribonucleotide production. Dephosphorylation regenerates the low-affinity form of the enzyme, leading to product release.

It carries out the reaction nicotinate + 5-phospho-alpha-D-ribose 1-diphosphate + ATP + H2O = nicotinate beta-D-ribonucleotide + ADP + phosphate + diphosphate. It functions in the pathway cofactor biosynthesis; NAD(+) biosynthesis; nicotinate D-ribonucleotide from nicotinate: step 1/1. Its function is as follows. Catalyzes the synthesis of beta-nicotinate D-ribonucleotide from nicotinate and 5-phospho-D-ribose 1-phosphate at the expense of ATP. The sequence is that of Nicotinate phosphoribosyltransferase from Pseudomonas putida (strain ATCC 700007 / DSM 6899 / JCM 31910 / BCRC 17059 / LMG 24140 / F1).